We begin with the raw amino-acid sequence, 971 residues long: Nuclear factor NF-kappa-B p105 subunit (971 aa).

The 326-residue stretch at 40–365 (PYLQILEQPK…EVQRKRQKLM (326 aa)) folds into the RHD domain. Position 59 is an S-nitrosocysteine; alternate (cysteine 59). A lipid anchor (S-(15-deoxy-Delta12,14-prostaglandin J2-9-yl)cysteine; alternate) is attached at cysteine 59. Lysine 323 participates in a covalent cross-link: Glycyl lysine isopeptide (Lys-Gly) (interchain with G-Cter in SUMO2). Phosphoserine; by PKA is present on serine 335. The short motif at 358–363 (QRKRQK) is the Nuclear localization signal element. The interval 370–392 (DSFGGGSGAGAGGGGMFGSGGGG) is GRR. The interaction with CFLAR stretch occupies residues 433–971 (INTKFKNGPK…GQEGPIEGKI (539 aa)). An N6-acetyllysine; by EP300 modification is found at lysine 438. The disordered stretch occupies residues 439–470 (NGPKDCAKSDDEESLTLPEKETEGEGPSLPMA). Serine 447 carries the phosphoserine modification. ANK repeat units follow at residues 538-567 (NGDS…GLIS), 577-606 (LYQT…DLSL), 610-639 (WGNS…AAPL), 646-675 (EGLN…EVNA), 680-710 (SGRT…HVDS), and 714-743 (DGTT…DPLV). The tract at residues 646 to 680 (EGLNAIHIAVMSNSLPCLLLLVAAGAEVNAQEQKS) is essential for interaction with HIF1AN. Asparagine 674 is modified ((3S)-3-hydroxyasparagine; by HIF1AN). A Phosphoserine modification is found at serine 755. The ANK 7 repeat unit spans residues 767 to 797 (PGTTPLDMAANWQVFDILNGKPYEPVFTSDD). In terms of domain architecture, Death spans 801–888 (QGDMKQLTED…EAIEVIQAAF (88 aa)). Serine 896 carries the phosphoserine modification. Serine 910 is modified (phosphoserine; by GSK3-beta; in vitro). Serine 926 carries the phosphoserine modification. Phosphoserine; by IKKB is present on residues serine 930 and serine 935. Residue serine 940 is modified to Phosphoserine. At threonine 946 the chain carries Phosphothreonine.

Component of the NF-kappa-B p65-p50 complex. Homodimer; component of the NF-kappa-B p50-p50 complex. Component of the NF-kappa-B p105-p50 complex. Component of the NF-kappa-B p50-c-Rel complex. Component of a complex consisting of the NF-kappa-B p50-p50 homodimer and BCL3. Also interacts with MAP3K8. NF-kappa-B p50 subunit interacts with NCOA3 coactivator, which may coactivate NF-kappa-B dependent expression via its histone acetyltransferase activity. Interacts with TSC22D3; this interaction prevents nuclear translocation and DNA-binding. Interacts with SPAG9 and UNC5CL. NFKB1/p105 interacts with CFLAR; the interaction inhibits p105 processing into p50. NFKB1/p105 forms a ternary complex with MAP3K8 and TNIP2. Interacts with GSK3B; the interaction prevents processing of p105 to p50. NFKB1/p50 interacts with NFKBIE. NFKB1/p50 interacts with NFKBIZ. Nuclear factor NF-kappa-B p50 subunit interacts with NFKBID. Directly interacts with MEN1. Interacts with HIF1AN. Interacts with FEM1AA; interaction is direct. Post-translationally, generation of the NF-kappa-B p50 (Nuclear factor NF-kappa-B p50 subunit) transcription factor takes place both cotranslationally and post-translationally via non-mutually exclusive mechanisms. A cotranslational processing allows the production of both p50 and p105 (Nuclear factor NF-kappa-B p105 subunit) from a single NFKB1 mRNA. While translation occurs, the particular unfolded structure after the GRR repeat region acts as a substrate for the proteasome, promoting degradation of the C-terminus. The GRR acts as a proteasomal 'stop signal', protecting the region upstream of the GRR from degradation and promoting generation of p50. It is unclear if limited proteasome degradation during cotranslational processing depends on ubiquitination. NF-kappa-B p50 is also generated post-translationally following ubiquitination by the KPC complex, leading to limited processing by the proteasome downstream of the GRR region, thereby generating p50. In terms of processing, phosphorylation at the C-terminus by IKBKB/IKKB acts as a signal for ubiquitination and promotes either complete degradation or processing to generate the NF-kappa-B p50 (Nuclear factor NF-kappa-B p50 subunit). Phosphorylation at Ser-910 primes p105 for proteolytic processing in response to TNF-alpha stimulation. Phosphorylation at Ser-926, Ser-930 and Ser-935 are required for BTRC/BTRCP-mediated ubiquitination and proteolysis. Phosphorylation at Ser-930 is also required for ubiquitination by the KPC complex and limited processing to generate NF-kappa-B p50 (Nuclear factor NF-kappa-B p50 subunit). Polyubiquitinated at multiple Lys residues in the C-terminus. Polyubiquitinated by the SCF(FBXW11) and SCF(BTRC) complexes following phosphorylation at Ser-926, Ser-930 and Ser-935, leading to its complete degradation. In contrast, polyubiquitination by the KPC complex following phosphorylation at Ser-930 leads to limited proteosomal processing and generation of the active NF-kappa-B p50 (Nuclear factor NF-kappa-B p50 subunit). Post-translationally, S-nitrosylation of Cys-59 affects DNA binding. In terms of processing, the covalent modification of cysteine by 15-deoxy-Delta12,14-prostaglandin-J2 is autocatalytic and reversible. It may occur as an alternative to other cysteine modifications, such as S-nitrosylation and S-palmitoylation.

Its subcellular location is the cytoplasm. The protein resides in the nucleus. Functionally, NF-kappa-B is a pleiotropic transcription factor present in almost all cell types and is the endpoint of a series of signal transduction events that are initiated by a vast array of stimuli related to many biological processes such as inflammation, immunity, differentiation, cell growth, tumorigenesis and apoptosis. NF-kappa-B is a homo- or heterodimeric complex formed by the Rel-like domain-containing proteins RELA/p65, RELB, NFKB1/p105, NFKB1/p50, REL and NFKB2/p52 and the heterodimeric p65-p50 complex appears to be most abundant one. The dimers bind at kappa-B sites in the DNA of their target genes and the individual dimers have distinct preferences for different kappa-B sites that they can bind with distinguishable affinity and specificity. Different dimer combinations act as transcriptional activators or repressors, respectively. NF-kappa-B is controlled by various mechanisms of post-translational modification and subcellular compartmentalization as well as by interactions with other cofactors or corepressors. NF-kappa-B complexes are held in the cytoplasm in an inactive state complexed with members of the NF-kappa-B inhibitor (I-kappa-B) family. In a conventional activation pathway, I-kappa-B is phosphorylated by I-kappa-B kinases (IKKs) in response to different activators, subsequently degraded thus liberating the active NF-kappa-B complex which translocates to the nucleus. NF-kappa-B heterodimeric p65-p50 and RelB-p50 complexes are transcriptional activators. The NF-kappa-B p50-p50 homodimer is a transcriptional repressor, but can act as a transcriptional activator when associated with BCL3. NFKB1 appears to have dual functions such as cytoplasmic retention of attached NF-kappa-B proteins by p105 and generation of p50 by a cotranslational processing. The proteasome-mediated process ensures the production of both p50 and p105 and preserves their independent function, although processing of NFKB1/p105 also appears to occur post-translationally. p50 binds to the kappa-B consensus sequence 5'-GGRNNYYCC-3', located in the enhancer region of genes involved in immune response and acute phase reactions. Plays a role in the regulation of apoptosis. In a complex with MAP3K8, NFKB1/p105 represses MAP3K8-induced MAPK signaling; active MAP3K8 is released by proteasome-dependent degradation of NFKB1/p105. P105 is the precursor of the active p50 subunit (Nuclear factor NF-kappa-B p50 subunit) of the nuclear factor NF-kappa-B. Acts as a cytoplasmic retention of attached NF-kappa-B proteins by p105. Its function is as follows. Constitutes the active form, which associates with RELA/p65 to form the NF-kappa-B p65-p50 complex to form a transcription factor. Together with RELA/p65, binds to the kappa-B consensus sequence 5'-GGRNNYYCC-3', located in the enhancer region of genes involved in immune response and acute phase reactions. In terms of biological role, isoform 3 (p98) (but not p84 or p105) acts as a transactivator of NF-kappa-B-regulated gene expression. Functionally, acts as an inhibitor of transactivation of p50 NF-kappa-B subunit, probably by sequestering it in the cytoplasm. This is Nuclear factor NF-kappa-B p105 subunit (Nfkb1) from Mus musculus (Mouse).